The following is a 467-amino-acid chain: Methylenetetrahydrofolate--tRNA-(uracil-5-)-methyltransferase TrmFO (467 aa).

10 to 15 (GAGLAG) contributes to the FAD binding site.

It belongs to the MnmG family. TrmFO subfamily. It depends on FAD as a cofactor.

It localises to the cytoplasm. The enzyme catalyses uridine(54) in tRNA + (6R)-5,10-methylene-5,6,7,8-tetrahydrofolate + NADH + H(+) = 5-methyluridine(54) in tRNA + (6S)-5,6,7,8-tetrahydrofolate + NAD(+). The catalysed reaction is uridine(54) in tRNA + (6R)-5,10-methylene-5,6,7,8-tetrahydrofolate + NADPH + H(+) = 5-methyluridine(54) in tRNA + (6S)-5,6,7,8-tetrahydrofolate + NADP(+). Its function is as follows. Catalyzes the folate-dependent formation of 5-methyl-uridine at position 54 (M-5-U54) in all tRNAs. The protein is Methylenetetrahydrofolate--tRNA-(uracil-5-)-methyltransferase TrmFO of Prochlorococcus marinus (strain MIT 9515).